Here is a 518-residue protein sequence, read N- to C-terminus: GTPase MTG2, mitochondrial (518 aa).

A mitochondrion-targeting transit peptide spans 1–23 (MSIAWSSVFKRELRLERFLPRVY). The region spanning 89–339 (GNFVDVRIVK…QHFLFELKSI (251 aa)) is the Obg domain. Positions 340–512 (ADLGLIGLPN…LKKKMFKCAR (173 aa)) constitute an OBG-type G domain. GTP is bound by residues 346–353 (GLPNAGKS), 394–398 (DIPGI), and 460–463 (NKVD).

The protein belongs to the TRAFAC class OBG-HflX-like GTPase superfamily. OBG GTPase family. In terms of assembly, interacts with the mitochondrial 54S large ribosomal subunit.

The protein resides in the mitochondrion inner membrane. Required for mitochondrial protein synthesis. May be involved in mitochondrial ribosome biogenesis. This Saccharomyces cerevisiae (strain ATCC 204508 / S288c) (Baker's yeast) protein is GTPase MTG2, mitochondrial (MTG2).